The sequence spans 91 residues: Cytochrome b-c1 complex subunit 10, mitochondrial (91 aa).

Topologically, residues 1–34 (MFATSILRSAYPAYKSPYGPKYQYQPHIDGITPK) are mitochondrial matrix. Residues 35–58 (QLVRILPTAAAWTGVALFAVVYYA) traverse the membrane as a helical segment. Over 59–91 (SGIPRLRRDVLQRIPYLGERYFVNEIPASDNPF) the chain is Mitochondrial intermembrane.

Belongs to the UQCR11/QCR10 family. As to quaternary structure, component of the ubiquinol-cytochrome c oxidoreductase (cytochrome b-c1 complex, complex III, CIII), a multisubunit enzyme composed of 10 subunits. The complex is composed of 3 respiratory subunits cytochrome b (cob), cytochrome c1 (cyt-1) and Rieske protein (fes-1), 2 core protein subunits pep and ucr-1, and 5 low-molecular weight protein subunits qcr6, qcr7, qcr8, qcr9 and probably NCU16844/qcr10. The complex exists as an obligatory dimer and forms supercomplexes (SCs) in the inner mitochondrial membrane with NADH-ubiquinone oxidoreductase (complex I, CI) and cytochrome c oxidase (complex IV, CIV), resulting in different assemblies (supercomplexes SCI(1)III(2), SCIII(2)IV(1) and SCIII(2)IV(2) as well as higher order I(x)III(y)IV(z) megacomplexes).

The protein resides in the mitochondrion inner membrane. In terms of biological role, component of the ubiquinol-cytochrome c oxidoreductase, a multisubunit transmembrane complex that is part of the mitochondrial electron transport chain which drives oxidative phosphorylation. The respiratory chain contains 3 multisubunit complexes succinate dehydrogenase (complex II, CII), ubiquinol-cytochrome c oxidoreductase (cytochrome b-c1 complex, complex III, CIII) and cytochrome c oxidase (complex IV, CIV), that cooperate to transfer electrons derived from NADH and succinate to molecular oxygen, creating an electrochemical gradient over the inner membrane that drives transmembrane transport and the ATP synthase. The cytochrome b-c1 complex catalyzes electron transfer from ubiquinol to cytochrome c, linking this redox reaction to translocation of protons across the mitochondrial inner membrane, with protons being carried across the membrane as hydrogens on the quinol. In the process called Q cycle, 2 protons are consumed from the matrix, 4 protons are released into the intermembrane space and 2 electrons are passed to cytochrome c. In Neurospora crassa (strain ATCC 24698 / 74-OR23-1A / CBS 708.71 / DSM 1257 / FGSC 987), this protein is Cytochrome b-c1 complex subunit 10, mitochondrial.